The sequence spans 509 residues: Glycerol kinase (509 aa).

Thr-17 is an ADP binding site. Thr-17, Thr-18, and Ser-19 together coordinate ATP. Thr-17 contacts sn-glycerol 3-phosphate. Arg-21 contributes to the ADP binding site. Residues Arg-87, Glu-88, Tyr-139, and Asp-256 each contribute to the sn-glycerol 3-phosphate site. Glycerol-binding residues include Arg-87, Glu-88, Tyr-139, Asp-256, and Gln-257. 2 residues coordinate ADP: Thr-278 and Gly-322. Positions 278, 322, 326, and 423 each coordinate ATP. The ADP site is built by Ala-423 and Asn-427.

This sequence belongs to the FGGY kinase family.

It carries out the reaction glycerol + ATP = sn-glycerol 3-phosphate + ADP + H(+). It participates in polyol metabolism; glycerol degradation via glycerol kinase pathway; sn-glycerol 3-phosphate from glycerol: step 1/1. With respect to regulation, inhibited by fructose 1,6-bisphosphate (FBP). Functionally, key enzyme in the regulation of glycerol uptake and metabolism. Catalyzes the phosphorylation of glycerol to yield sn-glycerol 3-phosphate. In Corynebacterium glutamicum (strain R), this protein is Glycerol kinase.